The primary structure comprises 198 residues: Peroxiredoxin-2 (198 aa).

N-acetylalanine is present on A2. The region spanning 6-164 (AHIGKPAPDF…ALRLVQAFQY (159 aa)) is the Thioredoxin domain. The Cysteine sulfenic acid (-SOH) intermediate role is filled by C51. At S112 the chain carries Phosphoserine. Residue T182 is modified to Phosphothreonine. K196 carries the post-translational modification N6-acetyllysine.

It belongs to the peroxiredoxin family. AhpC/Prx1 subfamily. As to quaternary structure, homodimer; disulfide-linked, upon oxidation. 5 homodimers assemble to form a ring-like decamer. Interacts with TIPIN. Post-translationally, the enzyme can be inactivated by further oxidation of the cysteine sulfenic acid (C(P)-SOH) to sulphinic acid (C(P)-SO2H) instead of its condensation to a disulfide bond. It can be reactivated by forming a transient disulfide bond with sulfiredoxin SRXN1, which reduces the cysteine sulfinic acid in an ATP- and Mg-dependent manner. In terms of processing, acetylation increases resistance to transition to high molecular-mass complexes. Deacetylated by HDAC6 which decreases reducing activity.

The protein resides in the cytoplasm. The catalysed reaction is a hydroperoxide + [thioredoxin]-dithiol = an alcohol + [thioredoxin]-disulfide + H2O. Functionally, thiol-specific peroxidase that catalyzes the reduction of hydrogen peroxide and organic hydroperoxides to water and alcohols, respectively. Plays a role in cell protection against oxidative stress by detoxifying peroxides and as sensor of hydrogen peroxide-mediated signaling events. Might participate in the signaling cascades of growth factors and tumor necrosis factor-alpha by regulating the intracellular concentrations of H(2)O(2). The sequence is that of Peroxiredoxin-2 (PRDX2) from Cricetulus griseus (Chinese hamster).